A 233-amino-acid polypeptide reads, in one-letter code: 2,3,4,5-tetrahydropyridine-2,6-dicarboxylate N-acetyltransferase (233 aa).

The protein belongs to the transferase hexapeptide repeat family. DapH subfamily.

The catalysed reaction is (S)-2,3,4,5-tetrahydrodipicolinate + acetyl-CoA + H2O = L-2-acetamido-6-oxoheptanedioate + CoA. It functions in the pathway amino-acid biosynthesis; L-lysine biosynthesis via DAP pathway; LL-2,6-diaminopimelate from (S)-tetrahydrodipicolinate (acetylase route): step 1/3. Catalyzes the transfer of an acetyl group from acetyl-CoA to tetrahydrodipicolinate. This chain is 2,3,4,5-tetrahydropyridine-2,6-dicarboxylate N-acetyltransferase, found in Leuconostoc mesenteroides subsp. mesenteroides (strain ATCC 8293 / DSM 20343 / BCRC 11652 / CCM 1803 / JCM 6124 / NCDO 523 / NBRC 100496 / NCIMB 8023 / NCTC 12954 / NRRL B-1118 / 37Y).